The chain runs to 515 residues: 2-isopropylmalate synthase (515 aa).

In terms of domain architecture, Pyruvate carboxyltransferase spans 5–267 (VIIFDTTLRD…RTGINHEEIH (263 aa)). Residues aspartate 14, histidine 202, histidine 204, and asparagine 238 each coordinate Mn(2+). The tract at residues 392–515 (KLNYLSVQSG…EMKQKKIATV (124 aa)) is regulatory domain.

Belongs to the alpha-IPM synthase/homocitrate synthase family. LeuA type 1 subfamily. Homodimer. Mn(2+) serves as cofactor.

The protein resides in the cytoplasm. The catalysed reaction is 3-methyl-2-oxobutanoate + acetyl-CoA + H2O = (2S)-2-isopropylmalate + CoA + H(+). The protein operates within amino-acid biosynthesis; L-leucine biosynthesis; L-leucine from 3-methyl-2-oxobutanoate: step 1/4. Catalyzes the condensation of the acetyl group of acetyl-CoA with 3-methyl-2-oxobutanoate (2-ketoisovalerate) to form 3-carboxy-3-hydroxy-4-methylpentanoate (2-isopropylmalate). The chain is 2-isopropylmalate synthase from Vibrio vulnificus (strain CMCP6).